Here is a 375-residue protein sequence, read N- to C-terminus: UDP-N-acetylglucosamine--N-acetylmuramyl-(pentapeptide) pyrophosphoryl-undecaprenol N-acetylglucosamine transferase (375 aa).

Residues 13-15 (TGG), Asn-124, Arg-165, Ser-193, and Gln-294 each bind UDP-N-acetyl-alpha-D-glucosamine.

This sequence belongs to the glycosyltransferase 28 family. MurG subfamily.

The protein resides in the cell inner membrane. The catalysed reaction is di-trans,octa-cis-undecaprenyl diphospho-N-acetyl-alpha-D-muramoyl-L-alanyl-D-glutamyl-meso-2,6-diaminopimeloyl-D-alanyl-D-alanine + UDP-N-acetyl-alpha-D-glucosamine = di-trans,octa-cis-undecaprenyl diphospho-[N-acetyl-alpha-D-glucosaminyl-(1-&gt;4)]-N-acetyl-alpha-D-muramoyl-L-alanyl-D-glutamyl-meso-2,6-diaminopimeloyl-D-alanyl-D-alanine + UDP + H(+). The protein operates within cell wall biogenesis; peptidoglycan biosynthesis. Cell wall formation. Catalyzes the transfer of a GlcNAc subunit on undecaprenyl-pyrophosphoryl-MurNAc-pentapeptide (lipid intermediate I) to form undecaprenyl-pyrophosphoryl-MurNAc-(pentapeptide)GlcNAc (lipid intermediate II). The sequence is that of UDP-N-acetylglucosamine--N-acetylmuramyl-(pentapeptide) pyrophosphoryl-undecaprenol N-acetylglucosamine transferase from Chelativorans sp. (strain BNC1).